A 1408-amino-acid chain; its full sequence is ARF guanine-nucleotide exchange factor 1 (1408 aa).

Ser49 carries the post-translational modification Phosphoserine. The tract at residues 262–287 is disordered; the sequence is TTTSDNDLSSTDDDSAVADDNKNEKP. In terms of domain architecture, SEC7 spans 552–706; it reads FNEKAKKGIQ…IIMLNTDSHN (155 aa).

In terms of assembly, interacts (via N-terminal region) with SEC21 (via C-terminus). Interacts with GMH1. Interacts with DRS2.

Its subcellular location is the cytoplasm. It localises to the cytosol. It is found in the membrane. The protein localises to the endoplasmic reticulum. The protein resides in the mitochondrion. In terms of biological role, activates the ARF proteins by exchanging bound GDP for free GTP. Plays a role in maintaining mitochondrial morphology, and in the turnover of mitochondria through mitophagy. The polypeptide is ARF guanine-nucleotide exchange factor 1 (GEA1) (Saccharomyces cerevisiae (strain ATCC 204508 / S288c) (Baker's yeast)).